The chain runs to 316 residues: MDWKLEGSAQKTESRVLQEHEITLDDPGEDGVSESFQLLQIDVGCEHWEQETLPTGSAAWCSKNVQRKQRHWEKIVAAKKSKRKQEKERRKANRVENSGIYPQHSKRFLRSLIKERLLEAKHSGPRLCIDLSMTNHMSKKELSRLAGQIRRLYGSNKKADRPFWIYLTGFTTDSPLYEECLRMNDGFSSYLLDRTEEDCFSLFPLETLVYLTPDSDHALENVDLNKVYILGGLVDESIQKKVTFQKAQEHSVKTARLPIQEYMVKCQNGKNYHSEILTINQVFDILSTYFETQNWPEALKKGVSSRKGYVLRNSVE.

Residues 73–98 (EKIVAAKKSKRKQEKERRKANRVENS) are a coiled coil. Residues 77-96 (AAKKSKRKQEKERRKANRVE) form a disordered region. An SAM-dependent MTase TRM10-type domain is found at 113 to 310 (IKERLLEAKH…KGVSSRKGYV (198 aa)).

It belongs to the class IV-like SAM-binding methyltransferase superfamily. TRM10 family.

The catalysed reaction is guanosine(9) in tRNA + S-adenosyl-L-methionine = N(1)-methylguanosine(9) in tRNA + S-adenosyl-L-homocysteine + H(+). Its function is as follows. S-adenosyl-L-methionine-dependent guanine N(1)-methyltransferase that catalyzes the formation of N(1)-methylguanine at position 9 (m1G9) in tRNAs. Probably not able to catalyze formation of N(1)-methyladenine at position 9 (m1A9) in tRNAs. The chain is tRNA methyltransferase 10 homolog B (TRMT10B) from Bos taurus (Bovine).